The chain runs to 434 residues: Methylenetetrahydrofolate--tRNA-(uracil-5-)-methyltransferase TrmFO (434 aa).

9-14 (GGGLAG) is an FAD binding site.

This sequence belongs to the MnmG family. TrmFO subfamily. It depends on FAD as a cofactor.

The protein localises to the cytoplasm. It carries out the reaction uridine(54) in tRNA + (6R)-5,10-methylene-5,6,7,8-tetrahydrofolate + NADH + H(+) = 5-methyluridine(54) in tRNA + (6S)-5,6,7,8-tetrahydrofolate + NAD(+). The catalysed reaction is uridine(54) in tRNA + (6R)-5,10-methylene-5,6,7,8-tetrahydrofolate + NADPH + H(+) = 5-methyluridine(54) in tRNA + (6S)-5,6,7,8-tetrahydrofolate + NADP(+). Functionally, catalyzes the folate-dependent formation of 5-methyl-uridine at position 54 (M-5-U54) in all tRNAs. This chain is Methylenetetrahydrofolate--tRNA-(uracil-5-)-methyltransferase TrmFO, found in Geobacter sulfurreducens (strain ATCC 51573 / DSM 12127 / PCA).